The primary structure comprises 414 residues: Isocitrate dehydrogenase [NADP] cytoplasmic (414 aa).

Position 2 is an N-acetylserine (Ser-2). Phosphotyrosine is present on Tyr-42. 75–77 serves as a coordination point for NADP(+); that stretch reads TIT. Thr-77 serves as a coordination point for substrate. Lys-81 carries the post-translational modification N6-acetyllysine. NADP(+) is bound at residue Arg-82. Substrate-binding positions include 94-100 and Arg-109; that span reads SPNGTIR. Lys-126 carries the N6-succinyllysine modification. Substrate contacts are provided by Arg-132 and Lys-212. An N6-acetyllysine mark is found at Lys-224, Lys-233, and Lys-243. Asp-252 contacts Mn(2+). Lys-260 contributes to the NADP(+) binding site. Mn(2+) is bound by residues Asp-275 and Asp-279. Residue 310–315 participates in NADP(+) binding; that stretch reads GTVTRH. The residue at position 321 (Lys-321) is an N6-acetyllysine. Asn-328 contributes to the NADP(+) binding site. The residue at position 389 (Ser-389) is a Phosphoserine. Residue Lys-400 is modified to N6-succinyllysine.

It belongs to the isocitrate and isopropylmalate dehydrogenases family. In terms of assembly, homodimer. The cofactor is Mg(2+). Mn(2+) serves as cofactor. Post-translationally, acetylation at Lys-374 dramatically reduces catalytic activity. As to expression, highly expressed in the liver followed by kidney, lower expression in spleen, brain and lung.

The protein resides in the cytoplasm. It is found in the cytosol. It carries out the reaction D-threo-isocitrate + NADP(+) = 2-oxoglutarate + CO2 + NADPH. Irreversibly inhibited by Cd(2+) concentrations above 50 uM. Its function is as follows. Catalyzes the NADP(+)-dependent oxidative decarboxylation of isocitrate (D-threo-isocitrate) to 2-ketoglutarate (2-oxoglutarate), which is required by other enzymes such as the phytanoyl-CoA dioxygenase. Plays a critical role in the generation of NADPH, an important cofactor in many biosynthesis pathways. May act as a corneal epithelial crystallin and may be involved in maintaining corneal epithelial transparency. In Mus musculus (Mouse), this protein is Isocitrate dehydrogenase [NADP] cytoplasmic (Idh1).